The chain runs to 253 residues: Aspartic acid-rich protein (253 aa).

The first 22 residues, 1–22 (MYLFIYIFFFFFFFFFFVIVQK), serve as a signal peptide directing secretion. Residues 211-253 (DDFDEEFDDDDDDDDDDDDDDDDDDKDDDLDGDDDGNNDDNDD) form a disordered region.

The protein belongs to the nucleosome assembly protein (NAP) family.

The protein is Aspartic acid-rich protein of Plasmodium falciparum (isolate fcm17 / Senegal).